A 332-amino-acid polypeptide reads, in one-letter code: Holliday junction branch migration complex subunit RuvB (332 aa).

A large ATPase domain (RuvB-L) region spans residues 1-181; that stretch reads MSRILDNEIM…FGITGHMEYY (181 aa). ATP contacts are provided by residues L20, R21, G62, K65, T66, T67, 128–130, R171, Y181, and R218; that span reads EDF. T66 provides a ligand contact to Mg(2+). The small ATPAse domain (RuvB-S) stretch occupies residues 182 to 252; the sequence is AHAGLTEIVE…ITDKALTMLD (71 aa). Residues 255 to 332 form a head domain (RuvB-H) region; sequence HEGLDYVDQK…EHLGYEYSEK (78 aa). Positions 291, 310, 312, and 315 each coordinate DNA.

The protein belongs to the RuvB family. In terms of assembly, homohexamer. Forms an RuvA(8)-RuvB(12)-Holliday junction (HJ) complex. HJ DNA is sandwiched between 2 RuvA tetramers; dsDNA enters through RuvA and exits via RuvB. An RuvB hexamer assembles on each DNA strand where it exits the tetramer. Each RuvB hexamer is contacted by two RuvA subunits (via domain III) on 2 adjacent RuvB subunits; this complex drives branch migration. In the full resolvosome a probable DNA-RuvA(4)-RuvB(12)-RuvC(2) complex forms which resolves the HJ.

It is found in the cytoplasm. It carries out the reaction ATP + H2O = ADP + phosphate + H(+). Its function is as follows. The RuvA-RuvB-RuvC complex processes Holliday junction (HJ) DNA during genetic recombination and DNA repair, while the RuvA-RuvB complex plays an important role in the rescue of blocked DNA replication forks via replication fork reversal (RFR). RuvA specifically binds to HJ cruciform DNA, conferring on it an open structure. The RuvB hexamer acts as an ATP-dependent pump, pulling dsDNA into and through the RuvAB complex. RuvB forms 2 homohexamers on either side of HJ DNA bound by 1 or 2 RuvA tetramers; 4 subunits per hexamer contact DNA at a time. Coordinated motions by a converter formed by DNA-disengaged RuvB subunits stimulates ATP hydrolysis and nucleotide exchange. Immobilization of the converter enables RuvB to convert the ATP-contained energy into a lever motion, pulling 2 nucleotides of DNA out of the RuvA tetramer per ATP hydrolyzed, thus driving DNA branch migration. The RuvB motors rotate together with the DNA substrate, which together with the progressing nucleotide cycle form the mechanistic basis for DNA recombination by continuous HJ branch migration. Branch migration allows RuvC to scan DNA until it finds its consensus sequence, where it cleaves and resolves cruciform DNA. This Streptococcus pneumoniae (strain JJA) protein is Holliday junction branch migration complex subunit RuvB.